A 222-amino-acid polypeptide reads, in one-letter code: MKKMLTLLLSAGLVASIFGVMPAAAAPTVVNSTIVVPKGTTYDGQGKTFVANPSTLGDGSQAENQKPVFRLEAGATLKNVIIGAPAADGVHCYGSCNISNVVWEDVGEDALTLKSSGTVNITGGAAYKAYDKVFQMNASGTINIKNFRADDIGKLVRQNGGTSYAVNMTLDNSNISNVKDSIMRTDSSVSQGKITNTRYSKVPTLFKGFASGKTSQSGNTQY.

A signal peptide spans 1-25 (MKKMLTLLLSAGLVASIFGVMPAAA).

This sequence belongs to the polysaccharide lyase 3 family. Ca(2+) is required as a cofactor.

It is found in the secreted. The enzyme catalyses Eliminative cleavage of (1-&gt;4)-alpha-D-galacturonan to give oligosaccharides with 4-deoxy-alpha-D-galact-4-enuronosyl groups at their non-reducing ends.. The catalysed reaction is Eliminative cleavage of (1-&gt;4)-alpha-D-galacturonan methyl ester to give oligosaccharides with 4-deoxy-6-O-methyl-alpha-D-galact-4-enuronosyl groups at their non-reducing ends.. It participates in glycan metabolism; pectin degradation; 2-dehydro-3-deoxy-D-gluconate from pectin: step 2/5. Strongly inhibited by Ba(2+). To a lesser extent, is also inhibited by Sn(2+), Mg(2+) and Ag(+). Inhibited by EDTA in vitro. Functionally, catalyzes the depolymerization of both polygalacturonate and pectins of methyl esterification degree from 22 to 89%, with an endo mode of action. In contrast to the majority of pectate lyases, displays high activity on highly methylated pectins. Is not able to cleave trigalacturonate. Does not degrade xylans and carboxymethylcellulose (CMC). In Paenibacillus barcinonensis, this protein is Pectate lyase A (pelA).